The following is a 127-amino-acid chain: PRA1 family protein C (127 aa).

3 helical membrane passes run 15-35 (IFIS…LIVA), 53-73 (VIDD…IFLL), and 76-96 (VSRG…VHGM).

The protein belongs to the PRA1 family.

The protein resides in the endoplasmic reticulum membrane. Functionally, may be involved in both secretory and endocytic intracellular trafficking in the endosomal/prevacuolar compartments. This is PRA1 family protein C (PRA1C) from Arabidopsis thaliana (Mouse-ear cress).